Here is a 189-residue protein sequence, read N- to C-terminus: UPF0301 protein CAB604 (189 aa).

The protein belongs to the UPF0301 (AlgH) family.

The sequence is that of UPF0301 protein CAB604 from Chlamydia abortus (strain DSM 27085 / S26/3) (Chlamydophila abortus).